The chain runs to 406 residues: MSYFTEYKDLIAEGDLVLVWISRGNVKQLRIKSGEVFNTRYGSFAHDDIVGRPYGSQIGVRTKGSNRFGFIHVLQPTPELWTLSLPHRTQIVYTPDSSYIMQRLGCSPQSRVIEAGTGSGSFSHAFARTVGQLFSYEFHHMRYEQALAEFQEHGLIADGNVTITHRDVCQKGFLIKAGDTTSYEFLEGQDSVSVNADCIFLDLPAPWEAIPHLDAVIAKDRTARLCCFSPCIEQVDKTLEALELHGWEEIETVEIQGRQYESRRQMVRQLDDALERLRDVKRRKQHGTERRKRLGEQLGSVEELTDDVRPKTPKTSYNPFGKGSRVKEGDNGFEWKQVAKVESEIKSHTSYLTFASKILFKSRDENTVSQLLEQYKDFNPNVKAASKLDKRPQETSFEESQASNSV.

S-adenosyl-L-methionine contacts are provided by residues 119 to 121, Glu-137, Arg-142, 167 to 168, and Asp-202; these read SGS and DV. Residues 281–293 show a composition bias toward basic residues; that stretch reads KRRKQHGTERRKR. 2 disordered regions span residues 281 to 323 and 385 to 406; these read KRRK…FGKG and ASKL…SNSV. Residues 394 to 406 are compositionally biased toward polar residues; that stretch reads ETSFEESQASNSV.

Belongs to the class I-like SAM-binding methyltransferase superfamily. TRM61 family. In terms of assembly, heterotetramer; composed of two copies of TRM6 and two copies of TRM61.

Its subcellular location is the nucleus. It catalyses the reaction adenosine(58) in tRNA + S-adenosyl-L-methionine = N(1)-methyladenosine(58) in tRNA + S-adenosyl-L-homocysteine + H(+). In terms of biological role, catalytic subunit of tRNA (adenine-N(1)-)-methyltransferase, which catalyzes the formation of N(1)-methyladenine at position 58 (m1A58) in initiator methionyl-tRNA. The protein is tRNA (adenine(58)-N(1))-methyltransferase catalytic subunit TRM61 (TRM61) of Eremothecium gossypii (strain ATCC 10895 / CBS 109.51 / FGSC 9923 / NRRL Y-1056) (Yeast).